The sequence spans 302 residues: tRNA dimethylallyltransferase (302 aa).

ATP is bound at residue 12 to 19; that stretch reads GPTASGKS. Substrate is bound at residue 14–19; that stretch reads TASGKS. The tract at residues 37 to 40 is interaction with substrate tRNA; it reads DSMQ.

This sequence belongs to the IPP transferase family. As to quaternary structure, monomer. Mg(2+) serves as cofactor.

The catalysed reaction is adenosine(37) in tRNA + dimethylallyl diphosphate = N(6)-dimethylallyladenosine(37) in tRNA + diphosphate. In terms of biological role, catalyzes the transfer of a dimethylallyl group onto the adenine at position 37 in tRNAs that read codons beginning with uridine, leading to the formation of N6-(dimethylallyl)adenosine (i(6)A). The polypeptide is tRNA dimethylallyltransferase (Corynebacterium diphtheriae (strain ATCC 700971 / NCTC 13129 / Biotype gravis)).